Consider the following 199-residue polypeptide: ATP-dependent Clp protease proteolytic subunit (199 aa).

The Nucleophile role is filled by Ser-99. The active site involves His-124.

It belongs to the peptidase S14 family. As to quaternary structure, fourteen ClpP subunits assemble into 2 heptameric rings which stack back to back to give a disk-like structure with a central cavity, resembling the structure of eukaryotic proteasomes.

The protein resides in the cytoplasm. It carries out the reaction Hydrolysis of proteins to small peptides in the presence of ATP and magnesium. alpha-casein is the usual test substrate. In the absence of ATP, only oligopeptides shorter than five residues are hydrolyzed (such as succinyl-Leu-Tyr-|-NHMec, and Leu-Tyr-Leu-|-Tyr-Trp, in which cleavage of the -Tyr-|-Leu- and -Tyr-|-Trp bonds also occurs).. Functionally, cleaves peptides in various proteins in a process that requires ATP hydrolysis. Has a chymotrypsin-like activity. Plays a major role in the degradation of misfolded proteins. The polypeptide is ATP-dependent Clp protease proteolytic subunit (Lactococcus lactis subsp. cremoris (strain SK11)).